The following is a 431-amino-acid chain: Na(+)-translocating NADH-quinone reductase subunit F (431 aa).

A helical membrane pass occupies residues Ile10–Ile30. The region spanning Cys41–Tyr133 is the 2Fe-2S ferredoxin-type domain. Residues Cys76, Cys82, Cys85, and Cys117 each coordinate [2Fe-2S] cluster. The FAD-binding FR-type domain occupies Ala136–Lys286.

It belongs to the NqrF family. In terms of assembly, composed of six subunits; NqrA, NqrB, NqrC, NqrD, NqrE and NqrF. Requires [2Fe-2S] cluster as cofactor. FAD serves as cofactor.

It is found in the cell inner membrane. The enzyme catalyses a ubiquinone + n Na(+)(in) + NADH + H(+) = a ubiquinol + n Na(+)(out) + NAD(+). In terms of biological role, NQR complex catalyzes the reduction of ubiquinone-1 to ubiquinol by two successive reactions, coupled with the transport of Na(+) ions from the cytoplasm to the periplasm. The first step is catalyzed by NqrF, which accepts electrons from NADH and reduces ubiquinone-1 to ubisemiquinone by a one-electron transfer pathway. In Chlamydia caviae (strain ATCC VR-813 / DSM 19441 / 03DC25 / GPIC) (Chlamydophila caviae), this protein is Na(+)-translocating NADH-quinone reductase subunit F.